Reading from the N-terminus, the 135-residue chain is Histone H2A (135 aa).

The protein belongs to the histone H2A family. In terms of assembly, the nucleosome is a histone octamer containing two molecules each of H2A, H2B, H3 and H4 assembled in one H3-H4 heterotetramer and two H2A-H2B heterodimers. The octamer wraps approximately 147 bp of DNA.

The protein resides in the nucleus. The protein localises to the chromosome. Core component of nucleosome. Nucleosomes wrap and compact DNA into chromatin, limiting DNA accessibility to the cellular machineries which require DNA as a template. Histones thereby play a central role in transcription regulation, DNA repair, DNA replication and chromosomal stability. DNA accessibility is regulated via a complex set of post-translational modifications of histones, also called histone code, and nucleosome remodeling. This Trypanosoma cruzi protein is Histone H2A.